We begin with the raw amino-acid sequence, 416 residues long: Serine/threonine transporter SstT (416 aa).

The next 9 helical transmembrane spans lie at 14-34 (GSIVLQIMFGLVAGMALALLS), 43-63 (FLGTLFVKALKGVAPVLVFVL), 82-102 (VLVLYLVGTFLAALVGVVASF), 141-161 (ALATGNFIGILAWAAALGVAL), 192-212 (IGVFGLVADAIATTGFSALMG), 220-240 (LLGSMLFIALVVNPLIVFLAI), 298-318 (MAGAAITISVLSLAAVHTLGV), 339-359 (ASGVAGGSLLLIPLACSLFGI), and 363-383 (VAMQMVAVGFIIGVIQDSAET).

This sequence belongs to the dicarboxylate/amino acid:cation symporter (DAACS) (TC 2.A.23) family.

It localises to the cell inner membrane. The catalysed reaction is L-serine(in) + Na(+)(in) = L-serine(out) + Na(+)(out). It catalyses the reaction L-threonine(in) + Na(+)(in) = L-threonine(out) + Na(+)(out). Involved in the import of serine and threonine into the cell, with the concomitant import of sodium (symport system). This chain is Serine/threonine transporter SstT, found in Laribacter hongkongensis (strain HLHK9).